Reading from the N-terminus, the 296-residue chain is Aspartate and glycine-rich protein (296 aa).

Residues 1–77 (GDGENGNGNG…GNGNGNGNGN (77 aa)) are compositionally biased toward gly residues. Disordered regions lie at residues 1–219 (GDGE…DNGG) and 233–296 (RARA…YTSY). Composition is skewed to acidic residues over residues 80–96 (FDDDDWDDFDWDDDDWN) and 103–194 (NGDD…DDRW). Residues 198 to 210 (NGNGNGNGNGNGN) are compositionally biased toward gly residues. The span at 233-243 (RARAAASAAGR) shows a compositional bias: low complexity. The span at 244-259 (SRGGSGGSGGSGGSGG) shows a compositional bias: gly residues. The span at 270–281 (RAFASARASSGN) shows a compositional bias: low complexity.

Component of the acid-soluble and acid-insoluble organic matrix of calcified shell layers (at protein level).

It localises to the secreted. The sequence is that of Aspartate and glycine-rich protein from Haliotis asinina (Donkey's ear abalone).